The chain runs to 236 residues: 2,3,4,5-tetrahydropyridine-2,6-dicarboxylate N-acetyltransferase (236 aa).

The protein belongs to the transferase hexapeptide repeat family. DapH subfamily.

It catalyses the reaction (S)-2,3,4,5-tetrahydrodipicolinate + acetyl-CoA + H2O = L-2-acetamido-6-oxoheptanedioate + CoA. The protein operates within amino-acid biosynthesis; L-lysine biosynthesis via DAP pathway; LL-2,6-diaminopimelate from (S)-tetrahydrodipicolinate (acetylase route): step 1/3. Catalyzes the transfer of an acetyl group from acetyl-CoA to tetrahydrodipicolinate. The polypeptide is 2,3,4,5-tetrahydropyridine-2,6-dicarboxylate N-acetyltransferase (Listeria monocytogenes serotype 4b (strain CLIP80459)).